The sequence spans 585 residues: FAD-linked oxidoreductase apf9 (585 aa).

The signal sequence occupies residues 1 to 19; it reads MKPHTVSLVLSNLASLAAA. N-linked (GlcNAc...) asparagine glycans are attached at residues N40, N92, and N117. One can recognise an FAD-binding PCMH-type domain in the interval 108 to 294; sequence IGNSPVYVVN…TEITVKTYPT (187 aa). Pros-8alpha-FAD histidine is present on H145. Residues N352, N412, and N495 are each glycosylated (N-linked (GlcNAc...) asparagine).

This sequence belongs to the oxygen-dependent FAD-linked oxidoreductase family. Requires FAD as cofactor.

It participates in secondary metabolite biosynthesis. In terms of biological role, FAD-linked oxidoreductase; part of the gene cluster that mediates the biosynthesis of the cyclic tetrapeptide apicidin F (APF). The non-ribosomal peptide synthetase apf1 incorporates four different amino acids to produce apicidin F: L-phenylalanine, D-pipecolic acid (D-pip), N-methoxy-L-tryptophan and L-2-aminooctanedioic acid. L-Phenylalanine is the only proteinogenic amino acid directly used by apf1. The 3 other apf1 substrates are non-proteinogenic and have to be modified by other enzymes of the cluster. Lysine is converted to delta-1-pyrroline-5-carboxylate (P5C) which is reduced to L-pipecolic acid (L-pip) by apf3. L-pip is epimerized to D-pip, probably by apf1 activity, prior to incorporation. L-Tryptophan is N-oxidyzed by one of the cytochrome P450 monooxygenases (apf7 or apf8), and further methylated at the hydroxy group by the O-methyltransferase apf6 to yield N-methoxy-L-tryptophan. The synthesis of the fourth apf1 substrate is more complex. The fatty acid synthase apf5 is involved in the synthesis of the octanoic acid backbone of L-2-aminooctanedioic acid by fixing one acetyl-CoA unit and three malonyl-CoA units. Then one of the cytochrome P450 monooxygenases (apf7 or apf8) may oxidize this backbone to 2-oxooctanoic acid. The aminotransferase apf4 is predicted to catalyze the exchange of the keto group with an amino group. The next step would be the oxidation of 2-aminooctanoic acid by one of the cytochrome P450 monooxygenases (apf7 or apf8). The last step is the oxidation of 2-amino-8-hydroxyoctanoic acid to 2-aminooctanedioic acid is catalyzed by the FAD-dependent monooxygenase apf9. This chain is FAD-linked oxidoreductase apf9, found in Gibberella fujikuroi (strain CBS 195.34 / IMI 58289 / NRRL A-6831) (Bakanae and foot rot disease fungus).